The chain runs to 371 residues: MSSELLDALTILEKEKGISKEIIIEAIEAALISAYKRNFNQAQNVRVDLNRETGSIRVFARKDVVDEVYDQRLEISIEEAQGIHPEYMVGDVVEIEVTPKDFGRIAAQTAKQVVTQRVREAERGVIYSEFIDREEDIMTGIVQRLDNKFIYVSLGKIEALLPVNEQMPNESYKPHDRIKVYITKVEKTTKGPQIYVSRTHPGLLKRLFEIEVPEIYDGTVELKSVAREAGDRSKISVRTDDPDVDPVGSCVGPKGQRVQAIVNELKGEKIDIVNWSSDPVEFVANALSPSKVLDVIVNEEEKATTVIVPDYQLSLAIGKRGQNARLAAKLTGWKIDIKSETDARELGIYPRELEEDDEPLFTEPETAESDE.

The 65-residue stretch at 135–199 folds into the S1 motif domain; that stretch reads EDIMTGIVQR…KGPQIYVSRT (65 aa). In terms of domain architecture, KH spans 301–367; the sequence is EKATTVIVPD…EPLFTEPETA (67 aa). Residues 347–371 are disordered; the sequence is GIYPRELEEDDEPLFTEPETAESDE. Acidic residues predominate over residues 353–371; it reads LEEDDEPLFTEPETAESDE.

The protein belongs to the NusA family. As to quaternary structure, monomer. Binds directly to the core enzyme of the DNA-dependent RNA polymerase and to nascent RNA.

Its subcellular location is the cytoplasm. Its function is as follows. Participates in both transcription termination and antitermination. In Bacillus subtilis (strain 168), this protein is Transcription termination/antitermination protein NusA.